The sequence spans 429 residues: Probable beta-1,3-galactosyl-O-glycosyl-glycoprotein beta-1,6-N-acetylglucosaminyltransferase 7 (429 aa).

Over 1-8 (MSQLRATK) the chain is Cytoplasmic. Residues 9-25 (PGILVCAAIGIFVFLYL) form a helical; Signal-anchor for type II membrane protein membrane-spanning segment. At 26–429 (RNPTSEDPEE…ESHLNRRLNP (404 aa)) the chain is on the extracellular side. Cystine bridges form between Cys53–Cys205, Cys139–Cys354, Cys160–Cys187, and Cys363–Cys394. Asn87 carries N-linked (GlcNAc...) asparagine glycosylation. An N-linked (GlcNAc...) asparagine glycan is attached at Asn272.

Belongs to the glycosyltransferase 14 family.

It localises to the golgi apparatus membrane. Its pathway is protein modification; protein glycosylation. Its function is as follows. Probable glycosyltransferase. In Sus scrofa (Pig), this protein is Probable beta-1,3-galactosyl-O-glycosyl-glycoprotein beta-1,6-N-acetylglucosaminyltransferase 7.